A 333-amino-acid chain; its full sequence is MVMAAVIHKKGGPDNFVWEEVKVGSPGPGQVRLRNTAIGVNFLDTYHRAGIPHPLVVGEPPIVVGFEAAAVVEEVGPGVTDFTVGERVCTCLPPLGAYSQERLYPAEKLIKVPKDLDLDDVHLAGLMLKGMTAQYLLHQTHKVKPGDYVLIHAAAGGMGHIMVPWARHLGATVIGTVSTEEKAETARKLGCHHTINYSTQDFAEVVREITGGKGVDVVYDSIGKDTLQKSLDCLRPRGMCAAYGHASGVADPIRVVEDLGVRGSLFITRPALWHYMSNRSEIDEGSKCLFDAVKAGVLHSSVAKTFPLREAAAAHKYMGGRQTIGSIVLLPQA.

NADP(+) is bound at residue Ala-153–Gly-159.

The protein belongs to the zinc-containing alcohol dehydrogenase family.

It catalyses the reaction (S)-2-chloropropanoate + NADP(+) = 2-chloroacrylate + NADPH + H(+). In terms of biological role, involved in the degradation of unsaturated organohalogen compounds. Catalyzes the NADPH-dependent reduction of the carbon-carbon double bond of 2-chloroacrylate to produce (S)-2-chloropropionate, which is probably further metabolized to (R)-lactate by (S)-2-haloacid dehalogenase. Can also use 2-bromoacrylate as substrate. Does not act on acrylate, methacrylate, 1,4-benzoquinone and 1,4-naphthoquinone. The polypeptide is 2-haloacrylate reductase (Burkholderia sp).